The following is a 476-amino-acid chain: Protein transport protein Sec61 subunit alpha (476 aa).

The Cytoplasmic portion of the chain corresponds to 2–33 (GIKFLEVIKPFCAVLPEIQKPERKIQFREKVL). A helical membrane pass occupies residues 34–53 (WTAITLFIFLVCCQIPLFGI). Over 54–76 (MSSDSADPFYWMRVILASNRGTL) the chain is Lumenal. A helical transmembrane segment spans residues 77 to 96 (MELGISPIVTSGLIMQLLAG). Topologically, residues 97 to 117 (AKIIEVGDTPKDRALFNGAQK) are cytoplasmic. Residues 118 to 138 (LFGMIITIGQAIVYVMTGMYG) form a helical membrane-spanning segment. Over 139 to 144 (DPSEMG) the chain is Lumenal. A helical transmembrane segment spans residues 145–165 (AGICLLIIIQLFVAGLIVLLL). Residues 166–172 (DELLQKG) are Cytoplasmic-facing. Residues 173–193 (YGLGSGISLFIATNICETIVW) form a helical membrane-spanning segment. The Lumenal segment spans residues 194-240 (KAFSPTTVNTGRGTEFEGAIIALFHLLATRTDKVRALREAFYRQNLP). Residues 241–261 (NILNLIATVFVFAVVIYFQGF) form a helical membrane-spanning segment. Topologically, residues 262–288 (RVDLPIKSARYRGQYNTYPIKLFYTSN) are cytoplasmic. Residues 289–309 (IPIILQSALVSNLYVISQMLS) form a helical membrane-spanning segment. At 310-354 (TRFSGNFLVNLLGTWSDATSGGPARAYPVAGLCYYLSPPESFGSV) the chain is on the lumenal side. Residues 355–375 (LDDPVHAAIYIVFMLGSCAFF) form a helical membrane-spanning segment. The Cytoplasmic portion of the chain corresponds to 376-420 (SKTWIEVSGSSAKDVAKQLKEQQMVMRGHRETSMVHELNRYIPTA). Residues 421-441 (AAFGGLCIGGLSVMADFLGAI) form a helical membrane-spanning segment. Over 442-445 (GSGT) the chain is Lumenal. The chain crosses the membrane as a helical span at residues 446–462 (GILLAVTIIYQYFEIFV). The Cytoplasmic segment spans residues 463–476 (KEQSEMGSMGALLF).

This sequence belongs to the SecY/SEC61-alpha family. In terms of assembly, the SEC61 channel-forming translocon complex consists of channel-forming core components SEC61A1, SEC61B and SEC61G and different auxiliary components such as SEC62 and SEC63. The SEC61 channel associates with the multi-pass translocon (MPT) complex.

It localises to the endoplasmic reticulum membrane. Component of SEC61 channel-forming translocon complex that mediates transport of signal peptide-containing precursor polypeptides across the endoplasmic reticulum (ER). Forms a ribosome receptor and a gated pore in the ER membrane, both functions required for cotranslational translocation of nascent polypeptides. May cooperate with auxiliary protein SEC62, SEC63 and HSPA5/BiP to enable post-translational transport of small presecretory proteins. The SEC61 channel is also involved in ER membrane insertion of transmembrane proteins: it mediates membrane insertion of the first few transmembrane segments of proteins, while insertion of subsequent transmembrane regions of multi-pass membrane proteins is mediated by the multi-pass translocon (MPT) complex. This is Protein transport protein Sec61 subunit alpha (sec61a) from Dissostichus mawsoni (Antarctic cod).